A 362-amino-acid polypeptide reads, in one-letter code: Dihydroorotate dehydrogenase (quinone) (362 aa).

FMN is bound by residues Ala-62 to Lys-66 and Thr-86. Residue Lys-66 coordinates substrate. Position 111-115 (Asn-111–Phe-115) interacts with substrate. FMN-binding residues include Asn-139 and Asn-170. Position 170 (Asn-170) interacts with substrate. Ser-173 (nucleophile) is an active-site residue. Residue Asn-175 participates in substrate binding. Positions 215 and 243 each coordinate FMN. Residue Asn-244–Thr-245 participates in substrate binding. FMN contacts are provided by residues Gly-266, Gly-295, and Tyr-316–Ser-317.

The protein belongs to the dihydroorotate dehydrogenase family. Type 2 subfamily. As to quaternary structure, monomer. Requires FMN as cofactor.

The protein resides in the cell membrane. It carries out the reaction (S)-dihydroorotate + a quinone = orotate + a quinol. It participates in pyrimidine metabolism; UMP biosynthesis via de novo pathway; orotate from (S)-dihydroorotate (quinone route): step 1/1. In terms of biological role, catalyzes the conversion of dihydroorotate to orotate with quinone as electron acceptor. This is Dihydroorotate dehydrogenase (quinone) from Sinorhizobium fredii (strain NBRC 101917 / NGR234).